The sequence spans 1442 residues: Cleavage and polyadenylation specificity factor subunit 1 (1442 aa).

The protein belongs to the CPSF1 family. In terms of assembly, component of the CPSF complex, at least composed of CPSF160, CPSF100, CPSF73-I, CPSF73-II, CPSF30, FY and FIPS5. Forms a complex with cleavage and polyadenylation specificity factor (CPSF) subunits FY, CPSF30, CPSF73-I, CPSF 73-II and CPSF100.

The protein resides in the nucleus. CPSF plays a key role in pre-mRNA 3'-end formation, recognizing the AAUAAA signal sequence and interacting with poly(A)polymerase and other factors to bring about cleavage and poly(A) addition. This subunit is involved in the RNA recognition step of the polyadenylation reaction. This is Cleavage and polyadenylation specificity factor subunit 1 (CPSF160) from Arabidopsis thaliana (Mouse-ear cress).